The sequence spans 99 residues: Small ribosomal subunit protein bS21 (99 aa).

The tract at residues 60 to 99 (KKLQREGLLPMKPKPVFGAGPGGDRRGPGAGPGAGPRPAR) is disordered.

The protein belongs to the bacterial ribosomal protein bS21 family.

The polypeptide is Small ribosomal subunit protein bS21 (Rhodopseudomonas palustris (strain BisA53)).